The sequence spans 243 residues: Pyridoxine 5'-phosphate synthase (243 aa).

Asn9 is a binding site for 3-amino-2-oxopropyl phosphate. Asp11–His12 serves as a coordination point for 1-deoxy-D-xylulose 5-phosphate. Arg20 contributes to the 3-amino-2-oxopropyl phosphate binding site. The active-site Proton acceptor is His45. Residues Arg47 and His52 each coordinate 1-deoxy-D-xylulose 5-phosphate. The Proton acceptor role is filled by Glu72. A 1-deoxy-D-xylulose 5-phosphate-binding site is contributed by Thr102. Residue His193 is the Proton donor of the active site. 3-amino-2-oxopropyl phosphate-binding positions include Gly194 and Gly215–His216.

Belongs to the PNP synthase family. Homooctamer; tetramer of dimers.

The protein localises to the cytoplasm. The catalysed reaction is 3-amino-2-oxopropyl phosphate + 1-deoxy-D-xylulose 5-phosphate = pyridoxine 5'-phosphate + phosphate + 2 H2O + H(+). The protein operates within cofactor biosynthesis; pyridoxine 5'-phosphate biosynthesis; pyridoxine 5'-phosphate from D-erythrose 4-phosphate: step 5/5. Catalyzes the complicated ring closure reaction between the two acyclic compounds 1-deoxy-D-xylulose-5-phosphate (DXP) and 3-amino-2-oxopropyl phosphate (1-amino-acetone-3-phosphate or AAP) to form pyridoxine 5'-phosphate (PNP) and inorganic phosphate. The sequence is that of Pyridoxine 5'-phosphate synthase from Salmonella typhimurium (strain LT2 / SGSC1412 / ATCC 700720).